We begin with the raw amino-acid sequence, 244 residues long: 1-(5-phosphoribosyl)-5-[(5-phosphoribosylamino)methylideneamino] imidazole-4-carboxamide isomerase (244 aa).

Residue Asp-13 is the Proton acceptor of the active site. Asp-132 acts as the Proton donor in catalysis.

It belongs to the HisA/HisF family.

The protein resides in the cytoplasm. It catalyses the reaction 1-(5-phospho-beta-D-ribosyl)-5-[(5-phospho-beta-D-ribosylamino)methylideneamino]imidazole-4-carboxamide = 5-[(5-phospho-1-deoxy-D-ribulos-1-ylimino)methylamino]-1-(5-phospho-beta-D-ribosyl)imidazole-4-carboxamide. It participates in amino-acid biosynthesis; L-histidine biosynthesis; L-histidine from 5-phospho-alpha-D-ribose 1-diphosphate: step 4/9. The polypeptide is 1-(5-phosphoribosyl)-5-[(5-phosphoribosylamino)methylideneamino] imidazole-4-carboxamide isomerase (Renibacterium salmoninarum (strain ATCC 33209 / DSM 20767 / JCM 11484 / NBRC 15589 / NCIMB 2235)).